The chain runs to 142 residues: Large ribosomal subunit protein uL11 (142 aa).

The protein belongs to the universal ribosomal protein uL11 family. As to quaternary structure, part of the ribosomal stalk of the 50S ribosomal subunit. Interacts with L10 and the large rRNA to form the base of the stalk. L10 forms an elongated spine to which L12 dimers bind in a sequential fashion forming a multimeric L10(L12)X complex. One or more lysine residues are methylated.

Forms part of the ribosomal stalk which helps the ribosome interact with GTP-bound translation factors. This chain is Large ribosomal subunit protein uL11, found in Xanthomonas oryzae pv. oryzae (strain MAFF 311018).